A 452-amino-acid polypeptide reads, in one-letter code: MASASIPTDPDVSTICEDFMNLLPDEPSDDFALEVTDWANDEAIGSTPGEDSTTSRTVYVERTADTAYNPRYSKRRHGRRESYHHNRPKTLVVVLPDSNHHGGRDVETGYARIERGHRRSSRSYNTQSSRKHRDRSLSNRRRRPTTPPAMTTGERNDQTHDESYRLRFSKRDARRERIRKEYDIPVDRITGRAIEVVSTAGASVTIDSVRHLDETIEKLVVRYATIQEGDSWASGGCFPGIKQNTSWPELMLYGHELYRTFESYKMDSRIARALRERVIRGESLIEALESADELLTWIKMLAAKNLPIYTNNPIVATSKSLLENLKLKLGPFVRCLLLNRDNDLGSRTLPELLRQQRFSDITCITTYMFVMIARIANIVVRGSKFVEYDDISCNVQVLQEYTPGSCLAGVLEALITHQRECGRVECTLSTWAGHLSDARPYGKYFKCSTFNC.

The interval 42–164 (EAIGSTPGED…RNDQTHDESY (123 aa)) is disordered. Residues 98–107 (SNHHGGRDVE) are compositionally biased toward basic and acidic residues. Over residues 129–144 (SRKHRDRSLSNRRRRP) the composition is skewed to basic residues. The segment covering 154 to 164 (ERNDQTHDESY) has biased composition (basic and acidic residues). The Zn(2+) site is built by C335, H417, C421, and C426. The segment at 335-426 (CLLLNRDNDL…HQRECGRVEC (92 aa)) adopts a CHC2-type zinc-finger fold.

This sequence belongs to the HHV-1 ICP27 protein family. In terms of assembly, homodimer. Homodimerization is required for transactivation. Associates in a complex with RNA, and host export factors NXF1/TAP and ALYREF; these interactions allow nuclear export of viral transcripts. Interacts with three host shuttling SR proteins SRSF1, SRSF3 and SRSF7. Interacts with host SRPK1. Interacts with IE62; this interaction enhances IE62 transactivation. Post-translationally, phosphorylated in vitro by SRPK1.

It is found in the host cytoplasm. Its subcellular location is the host nucleus. In terms of biological role, multifunctional regulator of the expression of viral genes that mediates nuclear export of viral intronless mRNAs. This immediate early (EI) protein promotes the nuclear export of viral intronless mRNAs by interacting with mRNAs and host NXF1/TAP. The polypeptide is mRNA export factor ICP27 homolog (Varicella-zoster virus (strain Dumas) (HHV-3)).